Here is a 247-residue protein sequence, read N- to C-terminus: Probable transcriptional regulatory protein Gbem_3313 (247 aa).

Belongs to the TACO1 family.

It localises to the cytoplasm. In Citrifermentans bemidjiense (strain ATCC BAA-1014 / DSM 16622 / JCM 12645 / Bem) (Geobacter bemidjiensis), this protein is Probable transcriptional regulatory protein Gbem_3313.